The primary structure comprises 183 residues: Large ribosomal subunit protein eL18 (183 aa).

A disordered region spans residues 151 to 183; sequence HFGPAPGAPRSHTKPYVRSKGHEQAKPSRRSNV.

The protein belongs to the eukaryotic ribosomal protein eL18 family.

Its subcellular location is the cytoplasm. The sequence is that of Large ribosomal subunit protein eL18 (RpL18) from Plutella xylostella (Diamondback moth).